The primary structure comprises 277 residues: Cell division protein ZipA (277 aa).

The Periplasmic portion of the chain corresponds to 1-5 (MQDLR). The helical transmembrane segment at 6-26 (LMLLLFGVITIIVLFLHGVWA) threads the bilayer. Topologically, residues 27-277 (RRKERSALFY…NALIRSTPHL (251 aa)) are cytoplasmic. Positions 120-139 (QKKSDDLSHQSKETHHPSIQ) are disordered.

This sequence belongs to the ZipA family. As to quaternary structure, interacts with FtsZ via their C-terminal domains.

The protein localises to the cell inner membrane. Essential cell division protein that stabilizes the FtsZ protofilaments by cross-linking them and that serves as a cytoplasmic membrane anchor for the Z ring. Also required for the recruitment to the septal ring of downstream cell division proteins. The chain is Cell division protein ZipA from Hamiltonella defensa subsp. Acyrthosiphon pisum (strain 5AT).